Here is a 388-residue protein sequence, read N- to C-terminus: Lipoyl synthase, mitochondrial (388 aa).

The N-terminal 18 residues, 1–18, are a transit peptide targeting the mitochondrion; it reads MRLTTVQRRFLVSTKAKV. Positions 22 to 39 are enriched in low complexity; it reads SISSTANTGSASAGAPNG. The disordered stretch occupies residues 22-43; that stretch reads SISSTANTGSASAGAPNGQTRR. The [4Fe-4S] cluster site is built by cysteine 120, cysteine 125, cysteine 131, cysteine 151, cysteine 155, cysteine 158, and serine 366. A Radical SAM core domain is found at 134 to 355; the sequence is GKDKSKATAT…KDKAKEMGFL (222 aa).

Belongs to the radical SAM superfamily. Lipoyl synthase family. It depends on [4Fe-4S] cluster as a cofactor.

The protein localises to the mitochondrion. It carries out the reaction [[Fe-S] cluster scaffold protein carrying a second [4Fe-4S](2+) cluster] + N(6)-octanoyl-L-lysyl-[protein] + 2 oxidized [2Fe-2S]-[ferredoxin] + 2 S-adenosyl-L-methionine + 4 H(+) = [[Fe-S] cluster scaffold protein] + N(6)-[(R)-dihydrolipoyl]-L-lysyl-[protein] + 4 Fe(3+) + 2 hydrogen sulfide + 2 5'-deoxyadenosine + 2 L-methionine + 2 reduced [2Fe-2S]-[ferredoxin]. The protein operates within protein modification; protein lipoylation via endogenous pathway; protein N(6)-(lipoyl)lysine from octanoyl-[acyl-carrier-protein]: step 2/2. In terms of biological role, catalyzes the radical-mediated insertion of two sulfur atoms into the C-6 and C-8 positions of the octanoyl moiety bound to the lipoyl domains of lipoate-dependent enzymes, thereby converting the octanoylated domains into lipoylated derivatives. The chain is Lipoyl synthase, mitochondrial from Candida glabrata (strain ATCC 2001 / BCRC 20586 / JCM 3761 / NBRC 0622 / NRRL Y-65 / CBS 138) (Yeast).